A 250-amino-acid polypeptide reads, in one-letter code: Small ribosomal subunit protein uS2 (250 aa).

This sequence belongs to the universal ribosomal protein uS2 family.

The protein is Small ribosomal subunit protein uS2 of Acidovorax ebreus (strain TPSY) (Diaphorobacter sp. (strain TPSY)).